The chain runs to 424 residues: Elongation factor 1-alpha (424 aa).

Positions 5 to 223 (KPHLNLAFIG…NALKEPQKPV (219 aa)) constitute a tr-type G domain. The interval 14-21 (GHVDHGKS) is G1. 14–21 (GHVDHGKS) contacts GTP. Position 21 (Ser21) interacts with Mg(2+). The interval 70 to 74 (GVTID) is G2. The tract at residues 91-94 (DCPG) is G3. GTP-binding positions include 91–95 (DCPGH) and 146–149 (NKMD). Residues 146-149 (NKMD) form a G4 region. Positions 187 to 189 (SAY) are G5.

The protein belongs to the TRAFAC class translation factor GTPase superfamily. Classic translation factor GTPase family. EF-Tu/EF-1A subfamily.

Its subcellular location is the cytoplasm. The enzyme catalyses GTP + H2O = GDP + phosphate + H(+). Its function is as follows. GTP hydrolase that promotes the GTP-dependent binding of aminoacyl-tRNA to the A-site of ribosomes during protein biosynthesis. The sequence is that of Elongation factor 1-alpha from Methanothrix thermoacetophila (strain DSM 6194 / JCM 14653 / NBRC 101360 / PT) (Methanosaeta thermophila).